The sequence spans 2176 residues: Protein eyes shut (2176 aa).

Over 1–122 (MSNVHQFDTQ…NPNILLPTLR (122 aa)) the chain is Cytoplasmic. The chain crosses the membrane as a helical span at residues 123-143 (ILARGLLLPALILAILVGSSQ). Positions 144 to 180 (AGFACLSNPCVFGVCIDGLNSSYSCYCIDGYTGIQCQ) constitute an EGF-like 1 domain. The Extracellular portion of the chain corresponds to 144 to 2176 (AGFACLSNPC…DLHGDEPLTV (2033 aa)). Disulfide bonds link Cys148–Cys158, Cys153–Cys168, Cys170–Cys179, Cys186–Cys197, Cys191–Cys206, Cys208–Cys217, Cys224–Cys235, Cys229–Cys244, Cys246–Cys255, Cys262–Cys276, Cys270–Cys286, Cys288–Cys297, Cys304–Cys315, Cys309–Cys324, Cys326–Cys335, Cys342–Cys353, Cys347–Cys362, Cys364–Cys373, Cys380–Cys392, Cys386–Cys401, and Cys403–Cys412. The N-linked (GlcNAc...) asparagine glycan is linked to Asn163. An EGF-like 2; calcium-binding domain is found at 182-218 (NWDECWSSPCQNGGTCVDGVAYYNCTCPEGFSGSNCE). Asn205 carries an N-linked (GlcNAc...) asparagine glycan. In terms of domain architecture, EGF-like 3; calcium-binding spans 220 to 256 (NVDECMSNPCQNGGLCRDRTNGYICTCQPGYLGSHCE). Positions 258 to 298 (DVAVCETGTGARCQHGGECIEGPGLEFTCDCPAGWHGRICQ) constitute an EGF-like 4 domain. In terms of domain architecture, EGF-like 5; calcium-binding spans 300–336 (EINECASSPCQNGGVCVDKLAAYACACPMGYTGINCE). Residues 338-374 (EILICADNPCQNNALCLMEEGVPTCYCVPDYHGEKCE) form the EGF-like 6 domain. Residues 376-413 (QYDECQLGPRCMNGGVCIDGVDTFSCSCPPLLTGMLCE) form the EGF-like 7; calcium-binding domain. The N-linked (GlcNAc...) asparagine glycan is linked to Asn425. Low complexity-rich tracts occupy residues 429–447 (PATQ…MAPP) and 482–502 (VTSV…VSVE). Disordered regions lie at residues 429–465 (PATQ…SRAS), 482–639 (VTSV…RPTA), 757–783 (RFTT…LPTP), 802–854 (LITT…VEIT), and 902–1014 (APPA…GVPE). The span at 514–526 (GSHSISVEQTTAV) shows a compositional bias: polar residues. Residues 548–560 (SASESETETEEEI) are compositionally biased toward acidic residues. 2 stretches are compositionally biased toward low complexity: residues 564–582 (TTAR…ESPS) and 596–632 (TSAS…SEEV). The segment covering 757–775 (RFTTVQPPAGVTTTSPTED) has biased composition (polar residues). Basic residues predominate over residues 811–820 (THHHHHHHPH). 2 stretches are compositionally biased toward pro residues: residues 904–922 (PATP…PSPP) and 930–955 (TLPP…PTPP). The 37-residue stretch at 1018-1054 (GDVDCIKLGCYNGGTCVTTSEGSRCVCRFDRQGPLCE) folds into the EGF-like 8 domain. Cystine bridges form between Cys1022–Cys1033, Cys1027–Cys1042, and Cys1044–Cys1053. The 208-residue stretch at 1059–1266 (IRNAAFSGDS…GITECGSLAC (208 aa)) folds into the Laminin G-like 1 domain. N-linked (GlcNAc...) asparagine glycans are attached at residues Asn1165, Asn1170, and Asn1176. The 38-residue stretch at 1309 to 1346 (EISVCEDNPCQYGGTCVQFPGSGYLCLCPLGKHGHYCE) folds into the EGF-like 9 domain. Intrachain disulfides connect Cys1313-Cys1324, Cys1318-Cys1334, and Cys1336-Cys1345. In terms of domain architecture, Laminin G-like 2 spans 1353 to 1549 (LPSFSGSVNG…GVGQCGTREC (197 aa)). Asn1471 carries an N-linked (GlcNAc...) asparagine glycan. EGF-like domains are found at residues 1545-1581 (GTRE…PLCA) and 1583-1621 (PTNP…KNCE). Cystine bridges form between Cys1549-Cys1560, Cys1554-Cys1569, Cys1571-Cys1580, Cys1587-Cys1600, Cys1594-Cys1609, and Cys1611-Cys1620. Asn1665 and Asn1861 each carry an N-linked (GlcNAc...) asparagine glycan. Positions 1692–1879 (EKQRSFSPVP…NIRDCDGTAC (188 aa)) constitute a Laminin G-like 3 domain. 2 EGF-like domains span residues 1875 to 1912 (DGTA…DRCE) and 1913 to 1946 (YSET…FYCE). 6 cysteine pairs are disulfide-bonded: Cys1879–Cys1890, Cys1884–Cys1900, Cys1902–Cys1911, Cys1917–Cys1928, Cys1922–Cys1934, and Cys1936–Cys1945. Positions 1952-2166 (PTTPSFRGNS…TYQGENIGSC (215 aa)) constitute a Laminin G-like 4 domain. 3 N-linked (GlcNAc...) asparagine glycosylation sites follow: Asn1994, Asn2035, and Asn2099. The tract at residues 2080–2101 (GGRSLGSTTPRSTLAGRRKNSS) is disordered.

It belongs to the EYS family. Expressed from the beginning of rhabdomere biogenesis (48 hours after pupal formation), when it decorates the entire photoreceptor apical surface.

Its subcellular location is the membrane. The protein localises to the secreted. Its function is as follows. Essential for the formation of matrix-filled interrhabdomeral space: critical for the formation of epithelial lumina in the retina. Acts together with prominin (prom) and the cell adhesion molecule chaoptin (chp) to choreograph the partitioning of rhabdomeres into an open system. The chain is Protein eyes shut from Drosophila melanogaster (Fruit fly).